A 337-amino-acid polypeptide reads, in one-letter code: Calcium-binding protein 39-like (337 aa).

It belongs to the Mo25 family. In terms of assembly, component of a trimeric complex composed of STK11/LKB1, STRAD (STRADA or STRADB) and CAB39/MO25 (CAB39/MO25alpha or CAB39L/MO25beta): the complex tethers STK11/LKB1 in the cytoplasm and stimulates its catalytic activity.

In terms of biological role, component of a complex that binds and activates STK11/LKB1. In the complex, required to stabilize the interaction between CAB39/MO25 (CAB39/MO25alpha or CAB39L/MO25beta) and STK11/LKB1. In Mus musculus (Mouse), this protein is Calcium-binding protein 39-like (Cab39l).